Reading from the N-terminus, the 261-residue chain is uncharacterized protein (261 aa).

A divalent metal cation contacts are provided by His7, His9, Glu96, His132, His156, and Asp211.

The protein belongs to the metallo-dependent hydrolases superfamily. TatD-type hydrolase family. A divalent metal cation serves as cofactor.

This is an uncharacterized protein from Mycoplasma pneumoniae (strain ATCC 29342 / M129 / Subtype 1) (Mycoplasmoides pneumoniae).